We begin with the raw amino-acid sequence, 81 residues long: Cytotoxin 2b (81 aa).

An N-terminal signal peptide occupies residues 1-21; sequence MKTLLLTLVVVTTVCLDLGYT. Disulfide bonds link C24/C42, C35/C59, C63/C74, and C75/C80.

The protein belongs to the three-finger toxin family. Short-chain subfamily. Type IA cytotoxin sub-subfamily. In terms of assembly, monomer in solution; Homodimer and oligomer in the presence of negatively charged lipids forming a pore with a size ranging between 20 and 30 Angstroms. Expressed by the venom gland.

Its subcellular location is the secreted. It is found in the target cell membrane. Its function is as follows. Shows cytolytic activity on many different cells by forming pore in lipid membranes. In vivo, increases heart rate or kills the animal by cardiac arrest. In addition, it binds to heparin with high affinity, interacts with Kv channel-interacting protein 1 (KCNIP1) in a calcium-independent manner, and binds to integrin alpha-V/beta-3 (ITGAV/ITGB3) with moderate affinity. This chain is Cytotoxin 2b, found in Naja sputatrix (Malayan spitting cobra).